The chain runs to 156 residues: Melatonin receptor type 1A (156 aa).

Transmembrane regions (helical) follow at residues Leu19–Thr39, Thr62–Leu82, and Phe115–Val135.

Belongs to the G-protein coupled receptor 1 family. At least in the brain, more precisely in the pars tuberalis and the suprachiasmatic nucleus.

The protein localises to the cell membrane. High affinity receptor for melatonin. Likely to mediate the reproductive and circadian actions of melatonin. The activity of this receptor is mediated by pertussis toxin sensitive G proteins that inhibit adenylate cyclase activity. Possibly involved in sleep induction, by melatonin activation of the potassium channel KCNMA1/BK and the dissociation of G-beta and G-gamma subunits, thereby decreasing synaptic transmission. In Rattus norvegicus (Rat), this protein is Melatonin receptor type 1A (Mtnr1a).